We begin with the raw amino-acid sequence, 560 residues long: Dihydroxy-acid dehydratase (560 aa).

Residue cysteine 50 participates in [2Fe-2S] cluster binding. Residue aspartate 82 coordinates Mg(2+). Cysteine 123 is a binding site for [2Fe-2S] cluster. Mg(2+) contacts are provided by aspartate 124 and lysine 125. Lysine 125 is subject to N6-carboxylysine. Cysteine 195 lines the [2Fe-2S] cluster pocket. Glutamate 447 is a Mg(2+) binding site. The active-site Proton acceptor is the serine 473.

This sequence belongs to the IlvD/Edd family. As to quaternary structure, homodimer. It depends on [2Fe-2S] cluster as a cofactor. Mg(2+) serves as cofactor.

The enzyme catalyses (2R)-2,3-dihydroxy-3-methylbutanoate = 3-methyl-2-oxobutanoate + H2O. It catalyses the reaction (2R,3R)-2,3-dihydroxy-3-methylpentanoate = (S)-3-methyl-2-oxopentanoate + H2O. It participates in amino-acid biosynthesis; L-isoleucine biosynthesis; L-isoleucine from 2-oxobutanoate: step 3/4. Its pathway is amino-acid biosynthesis; L-valine biosynthesis; L-valine from pyruvate: step 3/4. Functions in the biosynthesis of branched-chain amino acids. Catalyzes the dehydration of (2R,3R)-2,3-dihydroxy-3-methylpentanoate (2,3-dihydroxy-3-methylvalerate) into 2-oxo-3-methylpentanoate (2-oxo-3-methylvalerate) and of (2R)-2,3-dihydroxy-3-methylbutanoate (2,3-dihydroxyisovalerate) into 2-oxo-3-methylbutanoate (2-oxoisovalerate), the penultimate precursor to L-isoleucine and L-valine, respectively. The sequence is that of Dihydroxy-acid dehydratase from Thermosynechococcus vestitus (strain NIES-2133 / IAM M-273 / BP-1).